Here is a 70-residue protein sequence, read N- to C-terminus: uncharacterized protein (70 aa).

A C2H2-type zinc finger spans residues 21 to 43; the sequence is YECPICGEIYIKRKSMITHLRKH.

This is an uncharacterized protein from Saccharolobus islandicus (Sulfolobus islandicus).